Consider the following 340-residue polypeptide: Phosphoribosylformylglycinamidine cyclo-ligase (340 aa).

This sequence belongs to the AIR synthase family.

It is found in the cytoplasm. It catalyses the reaction 2-formamido-N(1)-(5-O-phospho-beta-D-ribosyl)acetamidine + ATP = 5-amino-1-(5-phospho-beta-D-ribosyl)imidazole + ADP + phosphate + H(+). The protein operates within purine metabolism; IMP biosynthesis via de novo pathway; 5-amino-1-(5-phospho-D-ribosyl)imidazole from N(2)-formyl-N(1)-(5-phospho-D-ribosyl)glycinamide: step 2/2. The protein is Phosphoribosylformylglycinamidine cyclo-ligase of Streptococcus agalactiae serotype III (strain NEM316).